The following is a 251-amino-acid chain: WUSCHEL-related homeobox 4 (251 aa).

2 disordered regions span residues 1–21 (MKVH…DSTS) and 33–93 (LAPK…RWNP). The span at 11-21 (SSSWDQHDSTS) shows a compositional bias: low complexity. A compositionally biased stretch (basic and acidic residues) spans 71 to 83 (KFEHKRDPPHQLE). A DNA-binding region (homeobox; WUS-type) is located at residues 86–150 (PGGTRWNPTQ…NHKARERQKQ (65 aa)).

Belongs to the WUS homeobox family. In terms of tissue distribution, expressed in the vasculature of the whole plant (roots, hypocotyls, cotyledons and leaves), trichomes and stomata. Expresse in the developing vascular bundles of root and shoot lateral organs.

Its subcellular location is the nucleus. In terms of biological role, promotes differentiation and/or maintenance of the vascular procambium, the initial cells of the developing vasculature. Part of the TDIF-TDR-WOX4 signaling pathway that plays a crucial role in the maintenance of the vascular meristem organization during secondary growth. Is required for promoting the proliferation of procambial/cambial stem cells but not for repressing their commitment to xylem differentiation in response to the TDIF signal. Acts redundantly with WOX14 downstream of the TDR/PXY receptor kinase to regulate procambial cell proliferation and differentiation in vascular tissue, independently of any role in vascular. Acts as a cambium regulator in the inflorescence stem. Is required for auxin-dependent cambium stimulation in the inflorescence stem. This chain is WUSCHEL-related homeobox 4 (WOX4), found in Arabidopsis thaliana (Mouse-ear cress).